The sequence spans 445 residues: Glycine--tRNA ligase (445 aa).

Residues Arg-97 and Glu-145 each coordinate substrate. Residues 177–179, 187–192, 262–263, and 308–311 contribute to the ATP site; these read RNE, FRTCEF, EV, and GLTR. 192 to 196 serves as a coordination point for substrate; the sequence is FEQME. 304–308 serves as a coordination point for substrate; sequence ETSAG.

It belongs to the class-II aminoacyl-tRNA synthetase family. Homodimer.

It is found in the cytoplasm. It carries out the reaction tRNA(Gly) + glycine + ATP = glycyl-tRNA(Gly) + AMP + diphosphate. In terms of biological role, catalyzes the attachment of glycine to tRNA(Gly). In Borreliella burgdorferi (strain ATCC 35210 / DSM 4680 / CIP 102532 / B31) (Borrelia burgdorferi), this protein is Glycine--tRNA ligase.